Here is a 579-residue protein sequence, read N- to C-terminus: MDDELRDRITEAAETNALLNAVKHDSEAQVGAIMGPLMGENPEFREYGDEIPGVIAPVVERVNGMDAEERRERLAELAPEKLEELEAEDEGEDHPLPDLPSAEEYDTVRMRVAPNPNGPWHIGHARMAAVVGTYKQRYDGEFICRFDDTDPETKRPDLDAYDAILDAIDYLGFEPDDVVNASDRVETYYEYARKLIDKGGAYTCSCPQGEFSDLKNNGEACPHRDKDAETTRSEFEAMVDGEYDSGEMVLRVRTDITHKNPALRDFVAFRMVDTPHPREAAEQYRCWPMLDFQSGLDDHLLGVTHIIRGIDLQDSAKRQQFVYDYFDWEYPEVIHWGHVQVDEYDVPLSTSSIAELIEDGELAGWDDPRAPTVASLERRGIRGEAVVDAMIQLGTSTSNVDLAMSSIYSNNRDLIDDDSDRAFFVRDSDDHGGLVERQIVGGPDAGEPPLHPDYEERGRREIPVTSGVVVEGDDLPDHGDRIWLKGYGCVRHTRDAFEYTGDDIDAVREEGVDVIHWAPADGPALRLRTMDGDVSGVAEPGLRNYDTDDVVQFERIGFARLDKVADDSDTESVAYFTHP.

Positions 114 to 124 match the 'HIGH' region motif; it reads PNPNGPWHIGH.

It belongs to the class-I aminoacyl-tRNA synthetase family. Glutamate--tRNA ligase type 2 subfamily.

Its subcellular location is the cytoplasm. The enzyme catalyses tRNA(Glu) + L-glutamate + ATP = L-glutamyl-tRNA(Glu) + AMP + diphosphate. Functionally, catalyzes the attachment of glutamate to tRNA(Glu) in a two-step reaction: glutamate is first activated by ATP to form Glu-AMP and then transferred to the acceptor end of tRNA(Glu). This Haloarcula marismortui (strain ATCC 43049 / DSM 3752 / JCM 8966 / VKM B-1809) (Halobacterium marismortui) protein is Glutamate--tRNA ligase.